Consider the following 858-residue polypeptide: Ubiquitin carboxyl-terminal hydrolase 5 (858 aa).

Ala2 is subject to N-acetylalanine. The segment at 74 to 96 (RRTRRPKEEDPATGTGDPPRKKP) is disordered. Lys113 participates in a covalent cross-link: Glycyl lysine isopeptide (Lys-Gly) (interchain with G-Cter in SUMO). Ser149 and Ser156 each carry phosphoserine. The UBP-type; degenerate zinc-finger motif lies at 175–283 (QVSKHAFSLK…EHLSHFGIDM (109 aa)). A disulfide bridge links Cys195 with Cys816. Zn(2+) contacts are provided by Cys199 and Cys202. Residue Trp209 participates in substrate binding. Cys219 contacts Zn(2+). 221–224 (RRYF) contributes to the substrate binding site. His232 contributes to the Zn(2+) binding site. Substrate is bound by residues Tyr259, Tyr261, and Asp264. Phosphothreonine is present on Thr292. The region spanning 326-856 (TGIRNLGNSC…LGYIYFYQRV (531 aa)) is the USP domain. The active-site Nucleophile is Cys335. Phosphothreonine is present on Thr623. 2 consecutive UBA domains span residues 654–695 (MLDE…VMSH) and 722–762 (PPPE…IFSH). Residues Ser779, Ser783, and Ser785 each carry the phosphoserine modification. His818 functions as the Proton acceptor in the catalytic mechanism.

It belongs to the peptidase C19 family. Homodimer. Interacts with TRIML1. Post-translationally, ubiquitinated by SMURF1; leading to proteasomal degradation. In terms of processing, SUMOylated at Lys-113; SUMOylation affects the interaction with Cav3.2 channels.

It is found in the cytoplasm. The protein resides in the stress granule. Its subcellular location is the nucleus. It carries out the reaction Thiol-dependent hydrolysis of ester, thioester, amide, peptide and isopeptide bonds formed by the C-terminal Gly of ubiquitin (a 76-residue protein attached to proteins as an intracellular targeting signal).. Functionally, deubiquitinating enzyme that participates in a wide range of cellular processes by specifically cleaving isopeptide bonds between ubiquitin and substrate proteins or ubiquitin itself. Affects thereby important cellular signaling pathways such as NF-kappa-B, Wnt/beta-catenin, and cytokine production by regulating ubiquitin-dependent protein degradation. Participates in the activation of the Wnt signaling pathway by promoting FOXM1 deubiquitination and stabilization that induces the recruitment of beta-catenin to Wnt target gene promoter. Regulates the assembly and disassembly of heat-induced stress granules by mediating the hydrolysis of unanchored ubiquitin chains. Promotes lipopolysaccharide-induced apoptosis and inflammatory response by stabilizing the TXNIP protein. Affects T-cell biology by stabilizing the inhibitory receptor on T-cells PDC1. Acts as a negative regulator of autophagy by regulating ULK1 at both protein and mRNA levels. Acts also as a negative regulator of type I interferon production by simultaneously removing both 'Lys-48'-linked unanchored and 'Lys-63'-linked anchored polyubiquitin chains on the transcription factor IRF3. Modulates the stability of DNA mismatch repair protein MLH1 and counteracts the effect of the ubiquitin ligase UBR4. Upon activation by insulin, it gets phosphorylated through mTORC1-mediated phosphorylation to enhance YTHDF1 stability by removing 'Lys-11'-linked polyubiquitination. May also deubiquitinate other substrates such as the calcium channel CACNA1H. In Homo sapiens (Human), this protein is Ubiquitin carboxyl-terminal hydrolase 5 (USP5).